A 695-amino-acid polypeptide reads, in one-letter code: Probable glutamine--tRNA ligase (695 aa).

The short motif at 201 to 211 is the 'HIGH' region element; it reads PEPNGILHIGH. ATP contacts are provided by residues 202-204 and 208-214; these read EPN and HIGHAKA. L-glutamine is bound by residues Asp-234 and Tyr-391. ATP is bound by residues Thr-410, 439–440, and 447–449; these read RL and LSK. Positions 446 to 450 match the 'KMSKS' region motif; the sequence is VLSKR.

This sequence belongs to the class-I aminoacyl-tRNA synthetase family.

The enzyme catalyses tRNA(Gln) + L-glutamine + ATP = L-glutaminyl-tRNA(Gln) + AMP + diphosphate. This is Probable glutamine--tRNA ligase from Vairimorpha ceranae (strain BRL01) (Microsporidian parasite).